Here is a 359-residue protein sequence, read N- to C-terminus: 4-hydroxy-3-methylbut-2-en-1-yl diphosphate synthase (flavodoxin) (359 aa).

[4Fe-4S] cluster-binding residues include Cys264, Cys267, Cys299, and Glu306.

This sequence belongs to the IspG family. It depends on [4Fe-4S] cluster as a cofactor.

The enzyme catalyses (2E)-4-hydroxy-3-methylbut-2-enyl diphosphate + oxidized [flavodoxin] + H2O + 2 H(+) = 2-C-methyl-D-erythritol 2,4-cyclic diphosphate + reduced [flavodoxin]. The protein operates within isoprenoid biosynthesis; isopentenyl diphosphate biosynthesis via DXP pathway; isopentenyl diphosphate from 1-deoxy-D-xylulose 5-phosphate: step 5/6. Its function is as follows. Converts 2C-methyl-D-erythritol 2,4-cyclodiphosphate (ME-2,4cPP) into 1-hydroxy-2-methyl-2-(E)-butenyl 4-diphosphate. The chain is 4-hydroxy-3-methylbut-2-en-1-yl diphosphate synthase (flavodoxin) from Helicobacter pylori (strain Shi470).